We begin with the raw amino-acid sequence, 138 residues long: Ribosome maturation factor RimP (138 aa).

The protein belongs to the RimP family.

The protein localises to the cytoplasm. Functionally, required for maturation of 30S ribosomal subunits. In Campylobacter concisus (strain 13826), this protein is Ribosome maturation factor RimP.